Here is a 617-residue protein sequence, read N- to C-terminus: Acetolactate synthase large subunit (617 aa).

E71 contributes to the thiamine diphosphate binding site. Residues R173, 281 to 302 (HGTA…VGAR), and 324 to 343 (EIDP…VLGD) contribute to the FAD site. The thiamine pyrophosphate binding stretch occupies residues 413-492 (QHQMWAAQHL…VKVVIVNNHW (80 aa)). The Mg(2+) site is built by D463 and N490.

Belongs to the TPP enzyme family. Dimer of large and small chains. It depends on Mg(2+) as a cofactor. Requires thiamine diphosphate as cofactor.

The enzyme catalyses 2 pyruvate + H(+) = (2S)-2-acetolactate + CO2. Its pathway is amino-acid biosynthesis; L-isoleucine biosynthesis; L-isoleucine from 2-oxobutanoate: step 1/4. It participates in amino-acid biosynthesis; L-valine biosynthesis; L-valine from pyruvate: step 1/4. The chain is Acetolactate synthase large subunit (ilvB) from Parasynechococcus marenigrum (strain WH8102).